A 202-amino-acid chain; its full sequence is Ribonuclease HII (202 aa).

Positions 18–202 (GQYAGVDEVG…KSFRPVREAM (185 aa)) constitute an RNase H type-2 domain. 3 residues coordinate a divalent metal cation: Asp24, Glu25, and Asp116.

This sequence belongs to the RNase HII family. Mn(2+) is required as a cofactor. It depends on Mg(2+) as a cofactor.

The protein localises to the cytoplasm. It carries out the reaction Endonucleolytic cleavage to 5'-phosphomonoester.. Functionally, endonuclease that specifically degrades the RNA of RNA-DNA hybrids. The protein is Ribonuclease HII of Shewanella piezotolerans (strain WP3 / JCM 13877).